Consider the following 102-residue polypeptide: Large ribosomal subunit protein bL21 (102 aa).

This sequence belongs to the bacterial ribosomal protein bL21 family. As to quaternary structure, part of the 50S ribosomal subunit. Contacts protein L20.

In terms of biological role, this protein binds to 23S rRNA in the presence of protein L20. The polypeptide is Large ribosomal subunit protein bL21 (Enterococcus faecalis (strain ATCC 700802 / V583)).